A 380-amino-acid polypeptide reads, in one-letter code: 3-dehydroquinate synthase (380 aa).

NAD(+) contacts are provided by residues 68–73, 102–106, 126–127, K139, and K148; these read PGEPNK, GTVLD, and TT. Residues E181, H243, and H259 each contribute to the Zn(2+) site.

Belongs to the sugar phosphate cyclases superfamily. Dehydroquinate synthase family. The cofactor is NAD(+). Co(2+) serves as cofactor. Requires Zn(2+) as cofactor.

Its subcellular location is the cytoplasm. The catalysed reaction is 7-phospho-2-dehydro-3-deoxy-D-arabino-heptonate = 3-dehydroquinate + phosphate. The protein operates within metabolic intermediate biosynthesis; chorismate biosynthesis; chorismate from D-erythrose 4-phosphate and phosphoenolpyruvate: step 2/7. Catalyzes the conversion of 3-deoxy-D-arabino-heptulosonate 7-phosphate (DAHP) to dehydroquinate (DHQ). This is 3-dehydroquinate synthase (aroB) from Chlamydia pneumoniae (Chlamydophila pneumoniae).